A 374-amino-acid polypeptide reads, in one-letter code: Peptide chain release factor 2 (374 aa).

Q252 bears the N5-methylglutamine mark.

The protein belongs to the prokaryotic/mitochondrial release factor family. Post-translationally, methylated by PrmC. Methylation increases the termination efficiency of RF2.

The protein resides in the cytoplasm. Its function is as follows. Peptide chain release factor 2 directs the termination of translation in response to the peptide chain termination codons UGA and UAA. This is Peptide chain release factor 2 from Xanthomonas euvesicatoria pv. vesicatoria (strain 85-10) (Xanthomonas campestris pv. vesicatoria).